The sequence spans 33 residues: Dermaseptin-4 (33 aa).

The residue at position 33 (Leu33) is a Leucine amide.

As to expression, expressed by the skin glands.

The protein resides in the secreted. Has antiparasitic activity against trypomastigote form of T.cruzi (IC(50)=0.25 uM) in vitro but not against L.infantum. Probably acts by permeabilizing cell membranes. In vitro, shows no cytotoxicity against macrophages. Has antibacterial activity. This is Dermaseptin-4 from Pithecopus nordestinus (Northeastern Brazilian leaf frog).